A 324-amino-acid polypeptide reads, in one-letter code: Mevalonate kinase (324 aa).

ATP is bound at residue Pro103 to Ala113. The Proton acceptor role is filled by Asp154.

It belongs to the GHMP kinase family. Mevalonate kinase subfamily. Homodimer. Mg(2+) is required as a cofactor.

Its subcellular location is the cytoplasm. The enzyme catalyses (R)-mevalonate + ATP = (R)-5-phosphomevalonate + ADP + H(+). It functions in the pathway isoprenoid biosynthesis; isopentenyl diphosphate biosynthesis via mevalonate pathway; isopentenyl diphosphate from (R)-mevalonate: step 1/3. Catalyzes the phosphorylation of (R)-mevalonate (MVA) to (R)-mevalonate 5-phosphate (MVAP). Functions in the mevalonate (MVA) pathway leading to isopentenyl diphosphate (IPP), a key precursor for the biosynthesis of isoprenoid compounds such as archaeal membrane lipids. In Aeropyrum pernix (strain ATCC 700893 / DSM 11879 / JCM 9820 / NBRC 100138 / K1), this protein is Mevalonate kinase.